Here is a 654-residue protein sequence, read N- to C-terminus: Hepatocyte growth factor activator serine proteases (654 aa).

A signal peptide spans 1–33; the sequence is MGRWAWGPSLCPLPGMALLLLLLLLLVPHGAQP. The disordered stretch occupies residues 34 to 100; sequence QAGGNLTEPP…SSSPGDPVLT (67 aa). Positions 34-370 are cleaved as a propeptide — removed in mature form; it reads QAGGNLTEPP…RLAACESLAR (337 aa). 2 N-linked (GlcNAc...) asparagine glycosylation sites follow: Asn38 and Asn46. Positions 57 to 81 are enriched in low complexity; it reads PVTSVTPVTPATSAPEAQGPRGRGL. In terms of domain architecture, Fibronectin type-II spans 101-148; that stretch reads VDGQPCRFPFRYGGRMLHACTSEGSAHRKWCATTHNYDRDRAWGYCVQ. 19 cysteine pairs are disulfide-bonded: Cys106/Cys131, Cys120/Cys146, Cys162/Cys173, Cys167/Cys184, Cys186/Cys195, Cys200/Cys228, Cys226/Cys235, Cys243/Cys254, Cys248/Cys265, Cys267/Cys276, Cys284/Cys365, Cys305/Cys347, Cys336/Cys360, Cys393/Cys520, Cys431/Cys447, Cys439/Cys509, Cys534/Cys603, Cys566/Cys582, and Cys593/Cys621. An EGF-like 1 domain is found at 158–196; it reads ALDSCASSPCLNGGSCSHTQDPGSYHCTCPMAFTGRNCD. Positions 198-238 constitute a Fibronectin type-I domain; that stretch reads EKCFDETRYEHLEAGDRWARVSQGQVEQCECAGGQIRCEGT. An EGF-like 2 domain is found at 239-277; that stretch reads RHTACLSSPCLNGGTCHLIVATGTTVCSCPPGHAGRLCN. One can recognise a Kringle domain in the interval 283-365; it reads RCFVGNGTEY…SWEYCRLAAC (83 aa). Asn288 carries an N-linked (GlcNAc...) asparagine glycan. Residues 407–645 form the Peptidase S1 domain; it reads IIGGSSSLPG…YVDWIKDRIW (239 aa). Catalysis depends on His446, which acts as the Charge relay system. 2 N-linked (GlcNAc...) asparagine glycosylation sites follow: Asn467 and Asn491. Catalysis depends on Asp496, which acts as the Charge relay system. Asn545 is a glycosylation site (N-linked (GlcNAc...) asparagine). The Charge relay system role is filled by Ser597.

This sequence belongs to the peptidase S1 family. In terms of assembly, heterodimer of a short chain and a long chain linked by a disulfide bond. The active form of HGFAC presents in the serum is derived from the COOH-terminal region of the precursor by the cleavage of bonds between Arg-370 and Ile-371 and Arg-406 and Ile-407. Liver.

Its subcellular location is the secreted. Serine protease that hydrolyzes the inactive zymogen hepatocyte growth factor (HGFsc) to an activated disulfide-linked heterodimer, then initiating hepatocyte growth factor receptor signaling pathway. The chain is Hepatocyte growth factor activator serine proteases (HGFAC) from Canis lupus familiaris (Dog).